Reading from the N-terminus, the 258-residue chain is Type III pantothenate kinase (258 aa).

ATP is bound at residue 7 to 14 (DVGNTRLK). Residues Tyr-96 and 103 to 106 (GADR) each bind substrate. The active-site Proton acceptor is Asp-105. Residue Thr-133 coordinates ATP. Thr-183 contributes to the substrate binding site.

It belongs to the type III pantothenate kinase family. Homodimer. The cofactor is NH4(+). It depends on K(+) as a cofactor.

The protein resides in the cytoplasm. The catalysed reaction is (R)-pantothenate + ATP = (R)-4'-phosphopantothenate + ADP + H(+). The protein operates within cofactor biosynthesis; coenzyme A biosynthesis; CoA from (R)-pantothenate: step 1/5. Catalyzes the phosphorylation of pantothenate (Pan), the first step in CoA biosynthesis. This Acidovorax ebreus (strain TPSY) (Diaphorobacter sp. (strain TPSY)) protein is Type III pantothenate kinase.